The primary structure comprises 445 residues: Phosphoglucosamine mutase (445 aa).

The Phosphoserine intermediate role is filled by S102. S102, D241, D243, and D245 together coordinate Mg(2+). Residue S102 is modified to Phosphoserine.

It belongs to the phosphohexose mutase family. Mg(2+) is required as a cofactor. In terms of processing, activated by phosphorylation.

The enzyme catalyses alpha-D-glucosamine 1-phosphate = D-glucosamine 6-phosphate. Its function is as follows. Catalyzes the conversion of glucosamine-6-phosphate to glucosamine-1-phosphate. The sequence is that of Phosphoglucosamine mutase from Rhodococcus jostii (strain RHA1).